Reading from the N-terminus, the 364-residue chain is Protein LATERAL BRANCHING OXIDOREDUCTASE 1 (364 aa).

The 110-residue stretch at 203–312 (RFEEMFGEAV…RLTIVTFYAP (110 aa)) folds into the Fe2OG dioxygenase domain. Residues His235, Asp237, and His293 each contribute to the Fe cation site. Arg303 contributes to the 2-oxoglutarate binding site.

Belongs to the iron/ascorbate-dependent oxidoreductase family. As to quaternary structure, monomer. Fe(2+) serves as cofactor. L-ascorbate is required as a cofactor. Expressed in the vasculature throughout the plant and in the buds and root tips.

It is found in the cytoplasm. It catalyses the reaction (11R)-methyl carlactonoate + 2-oxoglutarate + O2 = (11R)-hydroxymethyl carlactonoate + succinate + CO2. Its function is as follows. Oxoglutarate-dependent dioxygenase involved in the biosynthesis of strigolactone natural products, bioactive compounds promoting plant fitness and soil microbe interactions, but preventing shoot branching. Catalyzes the hydroxylation of (11R)-methyl carlactonoate (MeCLA) to produce (11R)-hydroxymethyl carlactonoate (1'-HO-MeCLA) in final stages of strigolactone biosynthesis, downstream of MAX1 and CLAMT. This chain is Protein LATERAL BRANCHING OXIDOREDUCTASE 1, found in Arabidopsis thaliana (Mouse-ear cress).